Reading from the N-terminus, the 330-residue chain is Malate dehydrogenase (330 aa).

Residue 15–21 participates in NAD(+) binding; that stretch reads GAGGQIG. Substrate-binding residues include Arg95 and Arg101. Residues Asn108, Gln115, and 132-134 contribute to the NAD(+) site; that span reads VGN. The substrate site is built by Asn134 and Arg165. His190 serves as the catalytic Proton acceptor.

The protein belongs to the LDH/MDH superfamily. MDH type 2 family.

The catalysed reaction is (S)-malate + NAD(+) = oxaloacetate + NADH + H(+). Functionally, catalyzes the reversible oxidation of malate to oxaloacetate. The polypeptide is Malate dehydrogenase (Corynebacterium jeikeium (strain K411)).